A 398-amino-acid polypeptide reads, in one-letter code: Putative F-box protein At1g67450 (398 aa).

Residues 2-56 (TMMMSDLPNDLVEEILSRVPITSLGAVRSTCKRWNGLSKDRIVCKGDANQQFTGF) form the F-box domain.

This chain is Putative F-box protein At1g67450, found in Arabidopsis thaliana (Mouse-ear cress).